The chain runs to 404 residues: Cysteine desulfurase IscS (404 aa).

Pyridoxal 5'-phosphate-binding positions include 75–76 (AT), asparagine 155, glutamine 183, and 203–205 (SGH). N6-(pyridoxal phosphate)lysine is present on lysine 206. Threonine 243 contributes to the pyridoxal 5'-phosphate binding site. The active-site Cysteine persulfide intermediate is the cysteine 328. [2Fe-2S] cluster is bound at residue cysteine 328.

It belongs to the class-V pyridoxal-phosphate-dependent aminotransferase family. NifS/IscS subfamily. Homodimer. Forms a heterotetramer with IscU, interacts with other sulfur acceptors. The cofactor is pyridoxal 5'-phosphate.

The protein localises to the cytoplasm. The catalysed reaction is (sulfur carrier)-H + L-cysteine = (sulfur carrier)-SH + L-alanine. Its pathway is cofactor biosynthesis; iron-sulfur cluster biosynthesis. Its function is as follows. Master enzyme that delivers sulfur to a number of partners involved in Fe-S cluster assembly, tRNA modification or cofactor biosynthesis. Catalyzes the removal of elemental sulfur atoms from cysteine to produce alanine. Functions as a sulfur delivery protein for Fe-S cluster synthesis onto IscU, an Fe-S scaffold assembly protein, as well as other S acceptor proteins. This Klebsiella pneumoniae (strain 342) protein is Cysteine desulfurase IscS.